The following is a 418-amino-acid chain: Glutamyl-tRNA reductase (418 aa).

Substrate-binding positions include 49–52 (TCNR), serine 109, 114–116 (EPQ), and glutamine 120. Cysteine 50 functions as the Nucleophile in the catalytic mechanism. 189-194 (GAGETI) lines the NADP(+) pocket.

It belongs to the glutamyl-tRNA reductase family. As to quaternary structure, homodimer.

It catalyses the reaction (S)-4-amino-5-oxopentanoate + tRNA(Glu) + NADP(+) = L-glutamyl-tRNA(Glu) + NADPH + H(+). The protein operates within porphyrin-containing compound metabolism; protoporphyrin-IX biosynthesis; 5-aminolevulinate from L-glutamyl-tRNA(Glu): step 1/2. Its function is as follows. Catalyzes the NADPH-dependent reduction of glutamyl-tRNA(Glu) to glutamate 1-semialdehyde (GSA). This Escherichia fergusonii (strain ATCC 35469 / DSM 13698 / CCUG 18766 / IAM 14443 / JCM 21226 / LMG 7866 / NBRC 102419 / NCTC 12128 / CDC 0568-73) protein is Glutamyl-tRNA reductase.